The sequence spans 584 residues: DNA mismatch repair protein MutL (584 aa).

It belongs to the DNA mismatch repair MutL/HexB family.

Functionally, this protein is involved in the repair of mismatches in DNA. It is required for dam-dependent methyl-directed DNA mismatch repair. May act as a 'molecular matchmaker', a protein that promotes the formation of a stable complex between two or more DNA-binding proteins in an ATP-dependent manner without itself being part of a final effector complex. The polypeptide is DNA mismatch repair protein MutL (Buchnera aphidicola subsp. Acyrthosiphon pisum (strain 5A)).